A 255-amino-acid chain; its full sequence is Aspartate/glutamate leucyltransferase (255 aa).

It belongs to the R-transferase family. Bpt subfamily.

The protein resides in the cytoplasm. It catalyses the reaction N-terminal L-glutamyl-[protein] + L-leucyl-tRNA(Leu) = N-terminal L-leucyl-L-glutamyl-[protein] + tRNA(Leu) + H(+). The catalysed reaction is N-terminal L-aspartyl-[protein] + L-leucyl-tRNA(Leu) = N-terminal L-leucyl-L-aspartyl-[protein] + tRNA(Leu) + H(+). Its function is as follows. Functions in the N-end rule pathway of protein degradation where it conjugates Leu from its aminoacyl-tRNA to the N-termini of proteins containing an N-terminal aspartate or glutamate. The chain is Aspartate/glutamate leucyltransferase from Leptospira borgpetersenii serovar Hardjo-bovis (strain JB197).